We begin with the raw amino-acid sequence, 156 residues long: Transcription elongation factor GreA (156 aa).

Positions 44 to 67 (ENAEYEAAKEKQAMIEGRIQDLCQ) form a coiled coil.

This sequence belongs to the GreA/GreB family.

Necessary for efficient RNA polymerase transcription elongation past template-encoded arresting sites. The arresting sites in DNA have the property of trapping a certain fraction of elongating RNA polymerases that pass through, resulting in locked ternary complexes. Cleavage of the nascent transcript by cleavage factors such as GreA or GreB allows the resumption of elongation from the new 3'terminus. GreA releases sequences of 2 to 3 nucleotides. This Syntrophobacter fumaroxidans (strain DSM 10017 / MPOB) protein is Transcription elongation factor GreA.